Reading from the N-terminus, the 222-residue chain is Kinetochore protein Spc25 (222 aa).

Positions 51-100 form a coiled coil; it reads RHQRKVGKLQKVIMERREELDKRVSFIEELDRELEATKLRSLAMKDRIKQ.

It belongs to the SPC25 family. Component of the Ndc80 complex, which is composed of Ndc80, Nuf2 and Spc25.

It localises to the nucleus. Its subcellular location is the chromosome. The protein resides in the centromere. It is found in the kinetochore. In terms of biological role, acts as a component of the essential kinetochore-associated Ndc80 complex, which is required for chromosome segregation and spindle checkpoint activity during meiosis and mitosis. Required for kinetochore integrity and the organization of stable microtubule binding sites in the outer plate of the kinetochore. Participates in SAC signaling that responds specifically to disruptions in spindle microtubule dynamics. The NDC80 complex synergistically enhances the affinity of the SKA1 complex for microtubules and may allow the NDC80 complex to track depolymerizing microtubules. The chain is Kinetochore protein Spc25 from Drosophila sechellia (Fruit fly).